Here is a 122-residue protein sequence, read N- to C-terminus: Chorismate mutase AroH (122 aa).

A Chorismate mutase aroH-type domain is found at 2-120 (VRGIRGAITV…AVRLRPDLES (119 aa)). 3 residues coordinate prephenate: arginine 6, arginine 89, and tyrosine 107.

In terms of assembly, homotrimer.

It localises to the cytoplasm. It catalyses the reaction chorismate = prephenate. It functions in the pathway metabolic intermediate biosynthesis; prephenate biosynthesis; prephenate from chorismate: step 1/1. Inhibited by 40% with 500 uM tyrosine, and a tyrosine concentration as high as 5 mM reduced activity to 5%. Its function is as follows. Catalyzes the Claisen rearrangement of chorismate to prephenate. Probably involved in the aromatic amino acid biosynthesis. The sequence is that of Chorismate mutase AroH from Thermus thermophilus.